Here is a 702-residue protein sequence, read N- to C-terminus: Elongation factor G 2 (702 aa).

Residues 8–291 (ELYRNIGIVA…AVIDYLPAPS (284 aa)) enclose the tr-type G domain. GTP contacts are provided by residues 17–24 (AHVDAGKT), 89–93 (DTPGH), and 143–146 (NKMD). The interval 293–314 (IPAIRGTDPDDEEKHDERHADD) is disordered.

The protein belongs to the TRAFAC class translation factor GTPase superfamily. Classic translation factor GTPase family. EF-G/EF-2 subfamily.

It is found in the cytoplasm. Functionally, catalyzes the GTP-dependent ribosomal translocation step during translation elongation. During this step, the ribosome changes from the pre-translocational (PRE) to the post-translocational (POST) state as the newly formed A-site-bound peptidyl-tRNA and P-site-bound deacylated tRNA move to the P and E sites, respectively. Catalyzes the coordinated movement of the two tRNA molecules, the mRNA and conformational changes in the ribosome. The chain is Elongation factor G 2 (fusB) from Pseudomonas aeruginosa (strain ATCC 15692 / DSM 22644 / CIP 104116 / JCM 14847 / LMG 12228 / 1C / PRS 101 / PAO1).